A 237-amino-acid chain; its full sequence is Probable transcriptional regulatory protein MCAP_0598 (237 aa).

It belongs to the TACO1 family.

The protein localises to the cytoplasm. The chain is Probable transcriptional regulatory protein MCAP_0598 from Mycoplasma capricolum subsp. capricolum (strain California kid / ATCC 27343 / NCTC 10154).